A 435-amino-acid chain; its full sequence is MTDVDLRARPQEGMKEIPAGPKGRHQTVQVTVGNVKVGGGAPIVVQSMTNTDTADIDSTVKQVAALARAGSEMVRITVDREEAAAAVPHIREKLDKLGVDVPLIGDFHYIGHKLLSEYPACAAALAKYRINPGNVGFKNKRDTQFTEIVEIALKNNKAVRIGANWGSLDQELLTRLMEDNAKSPNPIDARAVTREAMVQSALLSAQRAEEIGLPKNKMILSAKVSNVQDLIAVYRELAARSDYAIHLGLTEAGMGSKGIVASSAALGILLQEGIGDTIRVSLTPEPGGDRTLEVKVAQEILQTMGFRTFVPLVAACPGCGRTTSTVFQELARDIQAFINEEMPAWRNRYPGVEQLNVAVMGCIVNGPGESKHADIGISLPGTGETPAAPVFVDGQKFRTLRGATIAADFKALVIDYIEQRYGGAPAKPSTVTAAE.

Basic and acidic residues predominate over residues 1 to 15; sequence MTDVDLRARPQEGMK. Residues 1-24 are disordered; it reads MTDVDLRARPQEGMKEIPAGPKGR. 4 residues coordinate [4Fe-4S] cluster: cysteine 316, cysteine 319, cysteine 362, and glutamate 369.

It belongs to the IspG family. Requires [4Fe-4S] cluster as cofactor.

It catalyses the reaction (2E)-4-hydroxy-3-methylbut-2-enyl diphosphate + oxidized [flavodoxin] + H2O + 2 H(+) = 2-C-methyl-D-erythritol 2,4-cyclic diphosphate + reduced [flavodoxin]. The protein operates within isoprenoid biosynthesis; isopentenyl diphosphate biosynthesis via DXP pathway; isopentenyl diphosphate from 1-deoxy-D-xylulose 5-phosphate: step 5/6. Functionally, converts 2C-methyl-D-erythritol 2,4-cyclodiphosphate (ME-2,4cPP) into 1-hydroxy-2-methyl-2-(E)-butenyl 4-diphosphate. The protein is 4-hydroxy-3-methylbut-2-en-1-yl diphosphate synthase (flavodoxin) of Afipia carboxidovorans (strain ATCC 49405 / DSM 1227 / KCTC 32145 / OM5) (Oligotropha carboxidovorans).